A 183-amino-acid polypeptide reads, in one-letter code: Glutamyl-tRNA(Gln) amidotransferase subunit F, mitochondrial (183 aa).

A mitochondrion-targeting transit peptide spans 1–23; sequence MSRMLNQIPRLITRSFRTSSVGY.

Belongs to the GatF family. Subunit of the heterotrimeric GatFAB amidotransferase (AdT) complex, composed of A, B and F subunits.

The protein resides in the mitochondrion inner membrane. The enzyme catalyses L-glutamyl-tRNA(Gln) + L-glutamine + ATP + H2O = L-glutaminyl-tRNA(Gln) + L-glutamate + ADP + phosphate + H(+). Functionally, allows the formation of correctly charged Gln-tRNA(Gln) through the transamidation of misacylated Glu-tRNA(Gln) in the mitochondria. The reaction takes place in the presence of glutamine and ATP through an activated gamma-phospho-Glu-tRNA(Gln). Required for proper protein synthesis within the mitochondrion. The protein is Glutamyl-tRNA(Gln) amidotransferase subunit F, mitochondrial of Debaryomyces hansenii (strain ATCC 36239 / CBS 767 / BCRC 21394 / JCM 1990 / NBRC 0083 / IGC 2968) (Yeast).